A 64-amino-acid chain; its full sequence is Copper-specific metallothionein-2 (64 aa).

Residues Cys-3, Cys-5, Cys-9, Cys-11, Cys-16, Cys-18, Cys-22, Cys-24, Cys-27, Cys-33, Cys-40, Cys-44, Cys-50, Cys-52, Cys-56, and Cys-58 each coordinate Cu(+).

This sequence belongs to the metallothionein superfamily. Type 2 family.

Its function is as follows. The metallothioneins are involved in the cellular sequestration of toxic metal ions and regulation of essential trace elements. This isoform binds exclusively copper. This Callinectes sapidus (Blue crab) protein is Copper-specific metallothionein-2.